The primary structure comprises 393 residues: MTISQRTAAILVAAGRGLRAGTGGPKQYRAIGGRTVIHRALAAFSEHPDVAVVQPVVNPDDIDVFNAAVSGLRHEVPAHGGATRQASVLAGLEALVPHRPDIVLIHDAARPFVTSAVISRAIQAAGKTGAAIPVVPVTDTIKEVTASGDIIATPERAKLRIAQTPQTFKFEVILEAHRRAARDGLTEFTDDAAIAEWAGLTVATFEGDVANMKLTTPEDFVREEARLAAQLGDIRTGTGYDVHAFGEGDHVWLCGLRVPHSKGFLAHSDGDVGLHALVDAILGALADGDIGSHFPPSDMKWKGASSDQFLKYAIERVTARGGRVANLEVTMICERPKIGPLRDQMRARIAEISGVDISRIAVKATTSERLGFTGREEGIAATASATIRLPWSA.

The 2-C-methyl-D-erythritol 4-phosphate cytidylyltransferase stretch occupies residues 1–234; sequence MTISQRTAAI…ARLAAQLGDI (234 aa). The interval 235–393 is 2-C-methyl-D-erythritol 2,4-cyclodiphosphate synthase; it reads RTGTGYDVHA…SATIRLPWSA (159 aa). Positions 241 and 243 each coordinate a divalent metal cation. 4-CDP-2-C-methyl-D-erythritol 2-phosphate-binding positions include 241-243 and 267-268; these read DVH and HS. His275 lines the a divalent metal cation pocket. Residues 289 to 291, 365 to 368, Phe372, and Arg375 contribute to the 4-CDP-2-C-methyl-D-erythritol 2-phosphate site; these read DIG and TTSE.

In the N-terminal section; belongs to the IspD/TarI cytidylyltransferase family. IspD subfamily. It in the C-terminal section; belongs to the IspF family. Requires a divalent metal cation as cofactor.

The enzyme catalyses 2-C-methyl-D-erythritol 4-phosphate + CTP + H(+) = 4-CDP-2-C-methyl-D-erythritol + diphosphate. It carries out the reaction 4-CDP-2-C-methyl-D-erythritol 2-phosphate = 2-C-methyl-D-erythritol 2,4-cyclic diphosphate + CMP. The protein operates within isoprenoid biosynthesis; isopentenyl diphosphate biosynthesis via DXP pathway; isopentenyl diphosphate from 1-deoxy-D-xylulose 5-phosphate: step 2/6. It functions in the pathway isoprenoid biosynthesis; isopentenyl diphosphate biosynthesis via DXP pathway; isopentenyl diphosphate from 1-deoxy-D-xylulose 5-phosphate: step 4/6. Functionally, bifunctional enzyme that catalyzes the formation of 4-diphosphocytidyl-2-C-methyl-D-erythritol from CTP and 2-C-methyl-D-erythritol 4-phosphate (MEP) (IspD), and catalyzes the conversion of 4-diphosphocytidyl-2-C-methyl-D-erythritol 2-phosphate (CDP-ME2P) to 2-C-methyl-D-erythritol 2,4-cyclodiphosphate (ME-CPP) with a corresponding release of cytidine 5-monophosphate (CMP) (IspF). The sequence is that of Bifunctional enzyme IspD/IspF from Bradyrhizobium sp. (strain BTAi1 / ATCC BAA-1182).